Reading from the N-terminus, the 760-residue chain is Catalase-peroxidase (760 aa).

A disordered region spans residues 1 to 57; the sequence is MTDSQDNRTPESPQGVDRKAEGGCPVLHDGVTAQGSESENPAIDSPTPRTGGRPNSL. Residues 129–251 constitute a cross-link (tryptophyl-tyrosyl-methioninium (Trp-Tyr) (with M-277)); sequence WHAAGTYRIH…LGAVQMGLIY (123 aa). Catalysis depends on H130, which acts as the Proton acceptor. Positions 251-277 form a cross-link, tryptophyl-tyrosyl-methioninium (Tyr-Met) (with W-129); it reads YVNPEGPNGNPDPLASARDIRETFARM. Residue H292 coordinates heme b.

The protein belongs to the peroxidase family. Peroxidase/catalase subfamily. As to quaternary structure, homodimer or homotetramer. Heme b serves as cofactor. Formation of the three residue Trp-Tyr-Met cross-link is important for the catalase, but not the peroxidase activity of the enzyme.

The enzyme catalyses H2O2 + AH2 = A + 2 H2O. It catalyses the reaction 2 H2O2 = O2 + 2 H2O. Functionally, bifunctional enzyme with both catalase and broad-spectrum peroxidase activity. This is Catalase-peroxidase from Nocardioides sp. (strain ATCC BAA-499 / JS614).